Reading from the N-terminus, the 486-residue chain is Glutamyl-tRNA(Gln) amidotransferase subunit A (486 aa).

Catalysis depends on charge relay system residues lysine 80 and serine 155. Residue serine 179 is the Acyl-ester intermediate of the active site.

The protein belongs to the amidase family. GatA subfamily. As to quaternary structure, heterotrimer of A, B and C subunits.

The catalysed reaction is L-glutamyl-tRNA(Gln) + L-glutamine + ATP + H2O = L-glutaminyl-tRNA(Gln) + L-glutamate + ADP + phosphate + H(+). In terms of biological role, allows the formation of correctly charged Gln-tRNA(Gln) through the transamidation of misacylated Glu-tRNA(Gln) in organisms which lack glutaminyl-tRNA synthetase. The reaction takes place in the presence of glutamine and ATP through an activated gamma-phospho-Glu-tRNA(Gln). The protein is Glutamyl-tRNA(Gln) amidotransferase subunit A of Geobacillus sp. (strain WCH70).